Reading from the N-terminus, the 308-residue chain is U-box domain-containing protein 54 (308 aa).

The segment at 172–235 (FSEFSTSAEK…NESDEDPRLE (64 aa)) is disordered. Residues 210 to 227 (ESPKKGRKETIEKSKSNE) show a composition bias toward basic and acidic residues. Positions 232-306 (PRLEDFKCPI…KDWLEKNPNY (75 aa)) constitute a U-box domain.

The catalysed reaction is S-ubiquitinyl-[E2 ubiquitin-conjugating enzyme]-L-cysteine + [acceptor protein]-L-lysine = [E2 ubiquitin-conjugating enzyme]-L-cysteine + N(6)-ubiquitinyl-[acceptor protein]-L-lysine.. Its pathway is protein modification; protein ubiquitination. Its function is as follows. Functions as an E3 ubiquitin ligase. In Arabidopsis thaliana (Mouse-ear cress), this protein is U-box domain-containing protein 54 (PUB54).